Consider the following 314-residue polypeptide: Serine acetyltransferase 1, chloroplastic (314 aa).

Belongs to the transferase hexapeptide repeat family. Homomultimer. Interacts with OASA1 and CYP20-3. Component of the cysteine synthase complex (CSC) composed of two OAS-TL dimers and one SAT hexamer. As to expression, mostly expressed in leaves. Localized in cortex, trichomes and vascular tissues, particularly in phloem.

It localises to the plastid. Its subcellular location is the chloroplast. The protein localises to the cytoplasm. It catalyses the reaction L-serine + acetyl-CoA = O-acetyl-L-serine + CoA. Its pathway is amino-acid biosynthesis; L-cysteine biosynthesis; L-cysteine from L-serine: step 1/2. In terms of biological role, serine acetyltransferase which catalyzes the formation of O-acetyl-L-serine from acetyl-CoA and L-serine. Also displays O-acetylserine (thio1)-lyase activity in vitro. May be involved in detoxification process by mediating the production of glutathione. In Arabidopsis thaliana (Mouse-ear cress), this protein is Serine acetyltransferase 1, chloroplastic (SAT1).